An 807-amino-acid chain; its full sequence is Glycerol-3-phosphate acyltransferase (807 aa).

The HXXXXD motif motif lies at 305–310; it reads CHRSHM.

It belongs to the GPAT/DAPAT family.

It is found in the cell inner membrane. The catalysed reaction is sn-glycerol 3-phosphate + an acyl-CoA = a 1-acyl-sn-glycero-3-phosphate + CoA. It functions in the pathway phospholipid metabolism; CDP-diacylglycerol biosynthesis; CDP-diacylglycerol from sn-glycerol 3-phosphate: step 1/3. This Klebsiella pneumoniae (strain 342) protein is Glycerol-3-phosphate acyltransferase.